The sequence spans 716 residues: RNA-directed RNA polymerase catalytic subunit (716 aa).

The 180-residue stretch at 286-465 (SSKLEAVSEV…GINMSPSKCI (180 aa)) folds into the RdRp catalytic domain.

This sequence belongs to the influenza viruses polymerase PB1 family. RNA polymerase is composed of three subunits: PA, PB1 and PB2.

It catalyses the reaction RNA(n) + a ribonucleoside 5'-triphosphate = RNA(n+1) + diphosphate. This is RNA-directed RNA polymerase catalytic subunit (P2) from Dhori virus (strain Indian/1313/61) (Dho).